Reading from the N-terminus, the 209-residue chain is Large ribosomal subunit protein uL3 (209 aa).

Positions 122 to 151 are disordered; it reads AIKRHGQSRGPMSHGSRYHRRPGSMGPVDP.

Belongs to the universal ribosomal protein uL3 family. Part of the 50S ribosomal subunit. Forms a cluster with proteins L14 and L19.

Functionally, one of the primary rRNA binding proteins, it binds directly near the 3'-end of the 23S rRNA, where it nucleates assembly of the 50S subunit. The sequence is that of Large ribosomal subunit protein uL3 from Bacillus velezensis (strain DSM 23117 / BGSC 10A6 / LMG 26770 / FZB42) (Bacillus amyloliquefaciens subsp. plantarum).